Consider the following 1323-residue polypeptide: MANVEKPNDCSGFPVVDLNSCFSNGFNNEKQEIEMETDDSPILLMSSSASRENSNTFSVIQRTPDGKIITTNNNMNSKINKQLDKLPENLRLNGRTPSGKLRSFVCEVCTRAFARQEHLKRHYRSHTNEKPYPCGLCNRCFTRRDLLIRHAQKIHSGNLGETISHTKKVSRTITKARKNSASSVKFQTPTYGTPDNGNFLNRTTANTRRKASPEANVKRKYLKKLTRRASFSAQSASSYALPDQSSLEQHPKDRVKFSTPELVPLDLKNPELDSSFDLNMNLDLNLNLDSNFNIALNRSDSSGSTMNLDYKLPESANNYTYSSGSPTRAYVGANTNSKNASFNDADLLSSSYWIKAYNDHLFSVSESDETSPMNSELNDTKLIVPDFKSTIHHLKDSRSSSWTVAIDNNSNNNKVSDNQPDFVDFQELLDNDTLGNDLLETTAVLKEFELLHDDSVSATATSNEIDLSHLNLSNSPISPHKLIYKNKEGTNDDMLISFGLDHPSNREDDLDKLCNMTRDVQAIFSQYLKGEESKRSLEDFLSTSNRKEKPDSGNYTFYGLDCLTLSKISRALPASTVNNNQPSHSIESKLFNEPMRNMCIKVLRYYEKFSHDSSESVMDSNPNLLSKELLMPAVSELNEYLDLFKNNFLPHFPIIHPSLLDLDLDSLQRYTNEDGYDDAENAQLFDRLSQGTDKEYDYEHYQILSISKIVCLPLFMATFGSLHKFGYKSQTIELYEMSRRILHSFLETKRRCRSTTVNDSYQNIWLMQSLILSFMFALVADYLEKIDSSLMKRQLSALCSTIRSNCLPTISANSEKSINNNNEPLTFGSPLQYIIFESKIRCTLMAYDFCQFLKCFFHIKFDLSIKEKDVETIYIPDNESKWASESIICNGHVVQKQNFYDFRNFYYSFTYGHLHSIPEFLGSSMIYYEYDLRKGTKSHVFLDRIDTKRLERSLDTSSYGNDNMAATNKNIAILIDDTIILKNNLMSMRFIKQIDRSFTEKVRKGQIAKIYDSFLNSVRLNFLKNYSVEVLCEFLVALNFSIRNISSLYVEEESDCSQRMNSPELPRIHLNNQALSVFNLQGYYYCFILIIKFLLDFEATPNFKLLRIFIELRSLANSILLPTLSRLYPQEFSGFPDVVFTQQFINKDNGMLVPGLSANEHHNGASAAVKTKLAKKINVEGLAMFINEILVNSFNDTSFLNMEDPIRNEFSFDNGDRAVTDLPRSAHFLSDTGLEGINFSGLNDSHQTVSTLNLLRYGENHSSKHKNGGKGQGFAEKYQLSLKYVTIAKLFFTNVKENYIHCHMLDKMASDFHTLENHLKGNS.

Ser-54 is modified (phosphoserine). C2H2-type zinc fingers lie at residues Phe-104–His-126 and Tyr-132–His-155. Positions Lys-175–Asn-216 are disordered. Residues Asn-179 to Asn-206 are compositionally biased toward polar residues. A phosphothreonine mark is found at Thr-188 and Thr-193. Ser-230 carries the post-translational modification Phosphoserine; by PKA; in vitro. A Phosphoserine modification is found at Ser-258. Position 259 is a phosphothreonine (Thr-259). Ser-299, Ser-323, and Ser-325 each carry phosphoserine. Thr-327 is modified (phosphothreonine).

In terms of processing, phosphorylation at Ser-230 by cAMP-dependent protein kinase A does not affect DNA binding but appears to prevent transcription of ADH2 during glucose repression.

Its subcellular location is the nucleus. In terms of biological role, required for transcriptional activation of glucose-repressible alcohol dehydrogenase (ADH2). This is Regulatory protein ADR1 (ADR1) from Saccharomyces cerevisiae (strain ATCC 204508 / S288c) (Baker's yeast).